The following is a 1763-amino-acid chain: Collagen alpha-2(IV) chain (1763 aa).

The N-terminal stretch at 1 to 26 is a signal peptide; it reads MSSRLRIPLWLLLPTTALVYFVTTVS. Positions 27–42 are 7S domain; that stretch reads TQITCRDCTNRGCFCV. Residues 43-1529 form a triple-helical region region; that stretch reads GEKGSMGIPG…SGPPGPPGPS (1487 aa). Disordered stretches follow at residues 51–529 and 550–1529; these read PGPQ…PGPK and AGYA…PGPS. Low complexity predominate over residues 72–81; that stretch reads PGPKGQKGSQ. The N-linked (GlcNAc...) asparagine glycan is linked to asparagine 126. A compositionally biased stretch (pro residues) spans 135–152; it reads PGLPGPPGMPGFPGPPGV. A compositionally biased stretch (basic and acidic residues) spans 190 to 199; sequence FPGEKGDRGD. Positions 206–217 are enriched in pro residues; it reads RGPPGEAGPPGN. Over residues 225 to 235 the composition is skewed to low complexity; it reads PKGDPGEQGPR. O-linked (Xyl...) (glycosaminoglycan) serine glycosylation occurs at alanine 249. Residues 326–335 are compositionally biased toward low complexity; the sequence is DGLPGVPGLP. Residues 400 to 409 show a composition bias toward gly residues; sequence GLPGGPGLPG. Composition is skewed to low complexity over residues 410–419 and 428–453; these read LPGLEGLPGP and IPGAPGVQGPPGLAGPPGAKGEPGPR. The segment covering 466–481 has biased composition (basic and acidic residues); the sequence is KDGRPGLDGLPGRKGE. Over residues 564–582 the composition is skewed to low complexity; sequence LPGIPGATGAPGDDGLPGA. A compositionally biased stretch (pro residues) spans 583–592; it reads PGRPGPPGPP. Low complexity-rich tracts occupy residues 699–714 and 731–783; these read DAGLPGLPGLPGAVGP and KDGL…PGIP. Pro residues predominate over residues 810 to 832; sequence PGLPGPKGEPGPSTTGPPGPPGF. Composition is skewed to low complexity over residues 865-895, 946-977, 1040-1051, 1077-1086, 1108-1146, 1210-1231, 1280-1296, 1367-1386, 1462-1480, and 1499-1510; these read EIGLPGLAGAPGFPGAKGEPGLPGLPGKEGP, FPGQKGQPGFPGVAGAKGEAGLPGLPGAPGQK, PGLPGQPGLRGP, LMGEKGLPGL, PGLKGEAGLPGAPGLPGQDGLPGLPGQKGESGFPGQPGL, PGFPGLKGEPGLPGLEGQPGPR, LPGLPGKDGLPGLPGLK, PAGLPGLPGLKGEPGLPGFP, LPGLDGLPGPSGPPGFAGA, and PGLPGFPGIEGI. The span at 1511–1528 shows a compositional bias: pro residues; it reads PGPPGLPGPSGPPGPPGP. The Collagen IV NC1 domain occupies 1533–1756; sequence GFLLVKHSQT…SRCQVCIRSP (224 aa). Disulfide bonds link cysteine 1548/cysteine 1637, cysteine 1581/cysteine 1634, cysteine 1593/cysteine 1599, cysteine 1656/cysteine 1752, cysteine 1690/cysteine 1749, and cysteine 1702/cysteine 1709.

The protein belongs to the type IV collagen family. As to quaternary structure, trimers of two alpha 1(IV) and one alpha 2(IV) chain. Type IV collagen forms a mesh-like network linked through intermolecular interactions between 7S domains and between NC1 domains. Prolines at the third position of the tripeptide repeating unit (G-X-Y) are hydroxylated in some or all of the chains. Post-translationally, type IV collagens contain numerous cysteine residues which are involved in inter- and intramolecular disulfide bonding. 12 of these, located in the NC1 domain, are conserved in all known type IV collagens. In terms of processing, the trimeric structure of the NC1 domains is stabilized by covalent bonds between Lys and Met residues.

The protein resides in the secreted. Its subcellular location is the extracellular space. It localises to the extracellular matrix. It is found in the basement membrane. Functionally, collagen type IV is specific for basement membranes. The sequence is that of Collagen alpha-2(IV) chain from Ascaris suum (Pig roundworm).